The sequence spans 171 residues: Shikimate kinase (171 aa).

Residue 14–19 coordinates ATP; sequence GAGKST. Position 18 (Ser-18) interacts with Mg(2+). 3 residues coordinate substrate: Asp-36, Arg-60, and Gly-82. An ATP-binding site is contributed by Arg-120. Arg-139 is a binding site for substrate. Position 156 (Gln-156) interacts with ATP.

It belongs to the shikimate kinase family. In terms of assembly, monomer. The cofactor is Mg(2+).

Its subcellular location is the cytoplasm. The catalysed reaction is shikimate + ATP = 3-phosphoshikimate + ADP + H(+). The protein operates within metabolic intermediate biosynthesis; chorismate biosynthesis; chorismate from D-erythrose 4-phosphate and phosphoenolpyruvate: step 5/7. Catalyzes the specific phosphorylation of the 3-hydroxyl group of shikimic acid using ATP as a cosubstrate. This Shewanella sp. (strain ANA-3) protein is Shikimate kinase.